The following is a 665-amino-acid chain: LisH domain-containing protein ARMC9 (665 aa).

One can recognise a LisH domain in the interval 7–39 (HESELLGLVKEYLDFAEFEDTLKTFLKECKIKG). A coiled-coil region spans residues 204–235 (QSNKDVLQQLHQQLVEAERRSMTYLKRYNRIQ). Ser-582 carries the phosphoserine modification. The segment covering 582–603 (SDDDEDEDDEEDHDTMEADLDK) has biased composition (acidic residues). Disordered stretches follow at residues 582–604 (SDDD…LDKD) and 636–665 (RRGT…GYPA).

In terms of assembly, interacts with TOGARAM1, CCDC66, CEP104, CSPP1 and CEP290. Interacts with NDUFAF2.

Its subcellular location is the cytoplasm. It localises to the cytoskeleton. The protein resides in the cilium basal body. The protein localises to the cell projection. It is found in the cilium. Its subcellular location is the microtubule organizing center. It localises to the centrosome. The protein resides in the centriole. Involved in ciliogenesis. It is required for appropriate acetylation and polyglutamylation of ciliary microtubules, and regulation of cilium length. Acts as a positive regulator of hedgehog (Hh)signaling. May participate in the trafficking and/or retention of GLI2 and GLI3 proteins at the ciliary tip. The sequence is that of LisH domain-containing protein ARMC9 (ARMC9) from Bos taurus (Bovine).